A 194-amino-acid chain; its full sequence is MTAIQLIVGLGNPGAEYEQTRHNAGAFFVERIAAAQRVDLVPERKFFGLTGRFTHQGQDVRLLIPTTYMNRSGQAVAALAGFYRIPVESILVAHDELDLPPGVAKLKVGGGHGGHNGLRDIIAQLGNQNTFHRLRLGIGHPGDASKVSGFVLGRAPRAEQEKLDASIDFALGVLPDIFAGEWNRAMKNLHSQKA.

A tRNA-binding site is contributed by Y17. H22 functions as the Proton acceptor in the catalytic mechanism. Positions 68, 70, and 116 each coordinate tRNA.

This sequence belongs to the PTH family. Monomer.

Its subcellular location is the cytoplasm. The catalysed reaction is an N-acyl-L-alpha-aminoacyl-tRNA + H2O = an N-acyl-L-amino acid + a tRNA + H(+). In terms of biological role, hydrolyzes ribosome-free peptidyl-tRNAs (with 1 or more amino acids incorporated), which drop off the ribosome during protein synthesis, or as a result of ribosome stalling. Catalyzes the release of premature peptidyl moieties from peptidyl-tRNA molecules trapped in stalled 50S ribosomal subunits, and thus maintains levels of free tRNAs and 50S ribosomes. This is Peptidyl-tRNA hydrolase from Pseudomonas syringae pv. syringae (strain B728a).